A 512-amino-acid chain; its full sequence is Maturase K (512 aa).

Belongs to the intron maturase 2 family. MatK subfamily.

Its subcellular location is the plastid. It localises to the chloroplast. Its function is as follows. Usually encoded in the trnK tRNA gene intron. Probably assists in splicing its own and other chloroplast group II introns. In Amorphophallus paeoniifolius (Whitespot giant arum), this protein is Maturase K.